We begin with the raw amino-acid sequence, 201 residues long: Peptidyl-tRNA hydrolase (201 aa).

Y14 lines the tRNA pocket. Catalysis depends on H19, which acts as the Proton acceptor. Residues F64, N66, and N112 each coordinate tRNA.

The protein belongs to the PTH family. In terms of assembly, monomer.

It is found in the cytoplasm. It catalyses the reaction an N-acyl-L-alpha-aminoacyl-tRNA + H2O = an N-acyl-L-amino acid + a tRNA + H(+). Its function is as follows. Hydrolyzes ribosome-free peptidyl-tRNAs (with 1 or more amino acids incorporated), which drop off the ribosome during protein synthesis, or as a result of ribosome stalling. Catalyzes the release of premature peptidyl moieties from peptidyl-tRNA molecules trapped in stalled 50S ribosomal subunits, and thus maintains levels of free tRNAs and 50S ribosomes. The sequence is that of Peptidyl-tRNA hydrolase from Rhodopseudomonas palustris (strain BisA53).